Here is a 271-residue protein sequence, read N- to C-terminus: Ribonuclease 3 (271 aa).

Positions 5 to 139 (PALLELKLDY…IMAAIYLDGG (135 aa)) constitute an RNase III domain. Glu52 serves as a coordination point for Mg(2+). The active site involves Asp56. 2 residues coordinate Mg(2+): Asp125 and Glu128. Glu128 is a catalytic residue. One can recognise a DRBM domain in the interval 172-241 (NFKSALQELA…ARGLYERLMG (70 aa)). The tract at residues 241 to 271 (GDPIVPLPDDSPGDSPDDSGDAAESGVISAT) is disordered. A compositionally biased stretch (acidic residues) spans 251-261 (SPGDSPDDSGD).

It belongs to the ribonuclease III family. Homodimer. The cofactor is Mg(2+).

The protein localises to the cytoplasm. The catalysed reaction is Endonucleolytic cleavage to 5'-phosphomonoester.. Digests double-stranded RNA. Involved in the processing of primary rRNA transcript to yield the immediate precursors to the large and small rRNAs (23S and 16S). Processes some mRNAs, and tRNAs when they are encoded in the rRNA operon. Processes pre-crRNA and tracrRNA of type II CRISPR loci if present in the organism. The polypeptide is Ribonuclease 3 (Solibacter usitatus (strain Ellin6076)).